The sequence spans 336 residues: Flap endonuclease 1 (336 aa).

Positions 1–98 are N-domain; it reads MGVDLGDILS…GTLAARAQMK (98 aa). Residues D27, D80, E150, E152, D171, D173, and D234 each contribute to the Mg(2+) site. The segment at 114–255 is I-domain; that stretch reads DSFRYAQATA…RALKLIREHG (142 aa). Residues 328 to 336 form an interaction with PCNA region; sequence GQSTLERWL.

This sequence belongs to the XPG/RAD2 endonuclease family. FEN1 subfamily. In terms of assembly, interacts with PCNA. PCNA stimulates the nuclease activity without altering cleavage specificity. The cofactor is Mg(2+).

Structure-specific nuclease with 5'-flap endonuclease and 5'-3' exonuclease activities involved in DNA replication and repair. During DNA replication, cleaves the 5'-overhanging flap structure that is generated by displacement synthesis when DNA polymerase encounters the 5'-end of a downstream Okazaki fragment. Binds the unpaired 3'-DNA end and kinks the DNA to facilitate 5' cleavage specificity. Cleaves one nucleotide into the double-stranded DNA from the junction in flap DNA, leaving a nick for ligation. Also involved in the base excision repair (BER) pathway. Acts as a genome stabilization factor that prevents flaps from equilibrating into structures that lead to duplications and deletions. Also possesses 5'-3' exonuclease activity on nicked or gapped double-stranded DNA. The chain is Flap endonuclease 1 from Methanothrix thermoacetophila (strain DSM 6194 / JCM 14653 / NBRC 101360 / PT) (Methanosaeta thermophila).